The following is a 179-amino-acid chain: ATP synthase subunit b (179 aa).

A helical transmembrane segment spans residues 13 to 33 (IHIDELVFGLIAFAVIFALVY).

This sequence belongs to the ATPase B chain family. F-type ATPases have 2 components, F(1) - the catalytic core - and F(0) - the membrane proton channel. F(1) has five subunits: alpha(3), beta(3), gamma(1), delta(1), epsilon(1). F(0) has three main subunits: a(1), b(2) and c(10-14). The alpha and beta chains form an alternating ring which encloses part of the gamma chain. F(1) is attached to F(0) by a central stalk formed by the gamma and epsilon chains, while a peripheral stalk is formed by the delta and b chains.

The protein localises to the cell membrane. Its function is as follows. F(1)F(0) ATP synthase produces ATP from ADP in the presence of a proton or sodium gradient. F-type ATPases consist of two structural domains, F(1) containing the extramembraneous catalytic core and F(0) containing the membrane proton channel, linked together by a central stalk and a peripheral stalk. During catalysis, ATP synthesis in the catalytic domain of F(1) is coupled via a rotary mechanism of the central stalk subunits to proton translocation. Component of the F(0) channel, it forms part of the peripheral stalk, linking F(1) to F(0). The polypeptide is ATP synthase subunit b (Thermobifida fusca (strain YX)).